The primary structure comprises 241 residues: Chloride intracellular channel protein 1 (241 aa).

An N-acetylalanine modification is found at alanine 2. Positions 2-90 are required for insertion into the membrane; it reads AEEQPQVELF…EEFLEAVLCP (89 aa). Lysine 13 carries the post-translational modification N6-acetyllysine. The short motif at 24 to 27 is the G-site element; sequence CPFS. Cysteine 24 and cysteine 59 form a disulfide bridge. Residues 26–46 traverse the membrane as a helical segment; that stretch reads FSQRLFMVLWLKGVTFNVTTV. The GST C-terminal domain maps to 93–233; sequence YPKLAALNPE…PDDEEIELAY (141 aa). The residue at position 119 (lysine 119) is an N6-acetyllysine. Serine 121 carries the post-translational modification Phosphoserine. Lysine 131 is subject to N6-acetyllysine. Serine 156 is subject to Phosphoserine. Tyrosine 233 carries the phosphotyrosine modification.

This sequence belongs to the chloride channel CLIC family. As to quaternary structure, monomer. Homodimer (in vitro). Interacts with TRAPPC2. Dimerization requires a conformation change that leads to the exposure of a large hydrophobic surface. In vivo, this may lead to membrane insertion.

Its subcellular location is the nucleus. The protein localises to the nucleus membrane. It localises to the cytoplasm. The protein resides in the cell membrane. It is found in the endoplasmic reticulum. The catalysed reaction is L-dehydroascorbate + 2 glutathione = glutathione disulfide + L-ascorbate. The enzyme catalyses chloride(in) = chloride(out). It catalyses the reaction iodide(out) = iodide(in). It carries out the reaction thiocyanate(in) = thiocyanate(out). The catalysed reaction is nitrate(in) = nitrate(out). The enzyme catalyses bromide(in) = bromide(out). It catalyses the reaction fluoride(in) = fluoride(out). Functionally, in the soluble state, catalyzes glutaredoxin-like thiol disulfide exchange reactions with reduced glutathione as electron donor. Reduces selenite and dehydroascorbate and may act as an antioxidant during oxidative stress response. Can insert into membranes and form voltage-dependent multi-ion conductive channels. Membrane insertion seems to be redox-regulated and may occur only under oxidizing conditions. Involved in regulation of the cell cycle. The chain is Chloride intracellular channel protein 1 (CLIC1) from Bos taurus (Bovine).